The chain runs to 356 residues: Tyrosine recombinase XerS (356 aa).

In terms of domain architecture, Core-binding (CB) spans 16–121 (VMPWYVLDYY…ALSSLYKYLT (106 aa)). One can recognise a Tyr recombinase domain in the interval 169 to 354 (AFLDYVDKEY…VNDEQKNALD (186 aa)). Active-site residues include Arg-210, Lys-234, His-306, Arg-309, and His-332. The active-site O-(3'-phospho-DNA)-tyrosine intermediate is the Tyr-341.

This sequence belongs to the 'phage' integrase family. XerS subfamily.

Its subcellular location is the cytoplasm. Its activity is regulated as follows. FtsK is required for recombination. Site-specific tyrosine recombinase, which acts by catalyzing the cutting and rejoining of the recombining DNA molecules. Essential to convert dimers of the bacterial chromosome into monomers to permit their segregation at cell division. The chain is Tyrosine recombinase XerS from Streptococcus pyogenes serotype M28 (strain MGAS6180).